A 194-amino-acid polypeptide reads, in one-letter code: Large ribosomal subunit protein bL25 (194 aa).

It belongs to the bacterial ribosomal protein bL25 family. CTC subfamily. In terms of assembly, part of the 50S ribosomal subunit; part of the 5S rRNA/L5/L18/L25 subcomplex. Contacts the 5S rRNA. Binds to the 5S rRNA independently of L5 and L18.

This is one of the proteins that binds to the 5S RNA in the ribosome where it forms part of the central protuberance. The protein is Large ribosomal subunit protein bL25 of Thermobifida fusca (strain YX).